Reading from the N-terminus, the 319-residue chain is ATP-dependent 6-phosphofructokinase (319 aa).

G11 contributes to the ATP binding site. 21–25 (RAVVR) provides a ligand contact to ADP. ATP contacts are provided by residues 72-73 (RS) and 102-105 (GDGS). D103 serves as a coordination point for Mg(2+). Residue 125 to 127 (TID) participates in substrate binding. D127 functions as the Proton acceptor in the catalytic mechanism. R154 is an ADP binding site. Residues R162 and 169–171 (MGR) each bind substrate. Residues 185–187 (GAE), R211, and 213–215 (KKH) contribute to the ADP site. Residues E222, R243, and 249–252 (HVQR) each bind substrate.

This sequence belongs to the phosphofructokinase type A (PFKA) family. ATP-dependent PFK group I subfamily. Prokaryotic clade 'B1' sub-subfamily. In terms of assembly, homotetramer. Requires Mg(2+) as cofactor.

The protein resides in the cytoplasm. It catalyses the reaction beta-D-fructose 6-phosphate + ATP = beta-D-fructose 1,6-bisphosphate + ADP + H(+). The protein operates within carbohydrate degradation; glycolysis; D-glyceraldehyde 3-phosphate and glycerone phosphate from D-glucose: step 3/4. With respect to regulation, allosterically activated by ADP and other diphosphonucleosides, and allosterically inhibited by phosphoenolpyruvate. Its function is as follows. Catalyzes the phosphorylation of D-fructose 6-phosphate to fructose 1,6-bisphosphate by ATP, the first committing step of glycolysis. The chain is ATP-dependent 6-phosphofructokinase from Natranaerobius thermophilus (strain ATCC BAA-1301 / DSM 18059 / JW/NM-WN-LF).